Consider the following 293-residue polypeptide: N(1)-aminopropylagmatine ureohydrolase (293 aa).

6 residues coordinate Mn(2+): His-105, Asp-128, His-130, Asp-132, Asp-210, and Asp-212.

This sequence belongs to the arginase family. Requires Mn(2+) as cofactor.

The enzyme catalyses N(1)-(3-aminopropyl)agmatine + H2O = urea + spermidine. The protein operates within amine and polyamine biosynthesis; spermidine biosynthesis. Its function is as follows. Involved in the biosynthesis of polyamines which are thought to support the growth of thermophilic microorganisms under high-temperature conditions. It seems that long-chain and branched-chain of polyamines effectively stabilize DNA and RNA, respectively. Catalyzes the decarboxylation of N1-(3-aminopropyl)agmatine to yield spermidine and urea. Does not act on agmatine. In Thermus thermophilus (strain ATCC BAA-163 / DSM 7039 / HB27), this protein is N(1)-aminopropylagmatine ureohydrolase.